Consider the following 780-residue polypeptide: Ribonucleoside-diphosphate reductase large subunit (780 aa).

Residues T177, 192-193 (SC), G223, 393-397 (NLCAE), and 595-599 (PTVGS) each bind substrate. C193 and C409 form a disulfide bridge. N393 functions as the Proton acceptor in the catalytic mechanism. The active-site Cysteine radical intermediate is C395. The active-site Proton acceptor is E397.

Belongs to the ribonucleoside diphosphate reductase large chain family. As to quaternary structure, heterotetramer composed of a homodimer of the large subunit (R1) and a homodimer of the small subunit (R2). Larger multisubunit protein complex are also active, composed of (R1)n(R2)n.

The enzyme catalyses a 2'-deoxyribonucleoside 5'-diphosphate + [thioredoxin]-disulfide + H2O = a ribonucleoside 5'-diphosphate + [thioredoxin]-dithiol. Its function is as follows. Ribonucleoside-diphosphate reductase holoenzyme provides the precursors necessary for viral DNA synthesis. Allows virus growth in non-dividing cells, as well as reactivation from latency in infected hosts. Catalyzes the biosynthesis of deoxyribonucleotides from the corresponding ribonucleotides. The polypeptide is Ribonucleoside-diphosphate reductase large subunit (Connochaetes taurinus (Blue wildebeest)).